We begin with the raw amino-acid sequence, 1845 residues long: Histone-lysine N-methyltransferase, H3 lysine-79 specific (1845 aa).

The segment covering 1–44 (MSTNSTPRKQKLSNSKSLQNSPISPTVKKTNSFPLGNNIPTNIN) has biased composition (polar residues). 8 disordered regions span residues 1-67 (MSTN…NGIG), 83-306 (PPLP…NKWT), 450-470 (SHDINNNNNNNNNNKNKNKNK), 486-571 (QKLK…TERK), 585-681 (RKER…NDSY), 741-767 (GETFLNDSRNNNNNNNNNKNNNNKKIE), 862-881 (QTTKTTTTTNNTTTTTAETE), and 963-1102 (KDNP…SNSL). 4 stretches are compositionally biased toward low complexity: residues 52–67 (NNSNNNINNNNSNGIG), 90–162 (SSSS…QQEP), 191–226 (PSTPNQSSNSSSLNSSLNFSSSNSSPSPTSTQSNNS), and 239–263 (NNNNNNNNNNNNNNNNNNNNNNNNN). Residues 268–280 (VIDDDDDDDDDEG) show a composition bias toward acidic residues. The span at 282 to 294 (SIKSTHTSTQSTP) shows a compositional bias: polar residues. A compositionally biased stretch (basic and acidic residues) spans 295 to 304 (IRDRRQRDNK). Positions 453-464 (INNNNNNNNNNK) are enriched in low complexity. Over residues 585–679 (RKERERKERK…IEKERREKND (95 aa)) the composition is skewed to basic and acidic residues. Positions 625-639 (KKKEKEKEKEKEKEK) are required for interaction with nucleosomes and DNA. Composition is skewed to low complexity over residues 750 to 763 (NNNNNNNNNKNNNN), 862 to 877 (QTTKTTTTTNNTTTTT), 972 to 1011 (NNNRNNNNNNNNIINNNNNNNNKNNNNKNNNNKNNNRNNN), and 1020 to 1067 (NNNN…NNTI). The span at 1069-1080 (KKIETIKKDINK) shows a compositional bias: basic and acidic residues. The span at 1084-1102 (KTTTTTSSSSSSTSSSNSL) shows a compositional bias: low complexity. Residues 1125 to 1446 (FDVGIGVPVT…KDSDIVTDQT (322 aa)) enclose the DOT1 domain. Residues 1251–1254 (YGEA), 1274–1283 (FCDIGCGIGN), and Glu-1300 contribute to the S-adenosyl-L-methionine site. Disordered stretches follow at residues 1463 to 1559 (LQLF…NKPI), 1610 to 1661 (RISP…SSND), 1735 to 1762 (HQKSIHDQQKRLSRKQKKLAKKNKKKEQ), 1772 to 1791 (NYNNNNNNNNQNDNQVNHNN), and 1799 to 1845 (TDLI…DNNK). 3 stretches are compositionally biased toward low complexity: residues 1467-1522 (SSSS…TPNS), 1541-1556 (NNNNININNNNNNSNN), and 1610-1642 (RISPSLSLSTSSSSSSSLDSSPYSSPPSSSSSD). Residues 1643–1656 (NENDDDNGDDEDDS) are compositionally biased toward acidic residues. Residues 1745–1759 (RLSRKQKKLAKKNKK) show a composition bias toward basic residues. Low complexity-rich tracts occupy residues 1799–1817 (TDLINGYNNNNNNNIINND) and 1835–1845 (KDYNNINDNNK).

This sequence belongs to the class I-like SAM-binding methyltransferase superfamily. DOT1 family.

Its subcellular location is the nucleus. It carries out the reaction L-lysyl(79)-[histone H3] + 3 S-adenosyl-L-methionine = N(6),N(6),N(6)-trimethyl-L-lysyl(79)-[histone H3] + 3 S-adenosyl-L-homocysteine + 3 H(+). Its function is as follows. Histone methyltransferase that specifically methylates histone H3 to form H3K79me. This methylation is required for telomere silencing, correct growth and development, and for resistance to DNA damage induced by UV LIGHT. This is Histone-lysine N-methyltransferase, H3 lysine-79 specific from Dictyostelium discoideum (Social amoeba).